The primary structure comprises 431 residues: Trigger factor (431 aa).

The 86-residue stretch at glycine 163–proline 248 folds into the PPIase FKBP-type domain.

It belongs to the FKBP-type PPIase family. Tig subfamily.

The protein resides in the cytoplasm. It catalyses the reaction [protein]-peptidylproline (omega=180) = [protein]-peptidylproline (omega=0). In terms of biological role, involved in protein export. Acts as a chaperone by maintaining the newly synthesized protein in an open conformation. Functions as a peptidyl-prolyl cis-trans isomerase. This is Trigger factor from Latilactobacillus sakei subsp. sakei (strain 23K) (Lactobacillus sakei subsp. sakei).